The following is a 394-amino-acid chain: MTGLLSILLHYKGNGDLATTDIPSHEKIPSAKRTAVQFCIGPTHEQSPRMSTVSQGRVTFAVLPTKPKDEVTSMKANGSRQSSCIVSNARKRQSVHCLSRSPIPSTRLKENDSRLCSPLASPTGGLKRPAKVSFALANTPSRKGNLVPQSPRRTIATTCKGVLEDVLKKDNELKFNDSDEEDEVDDEEIESFNSFSRKMQTISNSRYRGSPKPNIEKQSCSSESDRVSQISDDEEDEEGSADEEDEEDSDVELSESSLSDDEDSPLRCPSTPVQTAAAPNESQIPDDTDFVPGTFDEDQPACLAFACSLTHANSKRSIMLPQDIDPTFPDSEPEDDGHASSTVGSLSKEEARFKAKAKWNYKSSFSAHVSSEVLRNSKSPPLDIARKAVGAHRV.

A phosphoserine mark is found at S117 and S121. Disordered stretches follow at residues 177-295 (DSDE…PGTF), 315-347 (KRSI…GSLS), and 370-394 (SSEV…AHRV). The segment covering 178-190 (SDEEDEVDDEEIE) has biased composition (acidic residues). 2 stretches are compositionally biased toward polar residues: residues 191–207 (SFNS…NSRY) and 216–230 (EKQS…VSQI). 2 stretches are compositionally biased toward acidic residues: residues 231–263 (SDDE…DDED) and 284–295 (IPDDTDFVPGTF). Residues 370-379 (SSEVLRNSKS) show a composition bias toward polar residues. S379 carries the phosphoserine modification.

It localises to the nucleus. This is an uncharacterized protein from Schizosaccharomyces pombe (strain 972 / ATCC 24843) (Fission yeast).